An 876-amino-acid polypeptide reads, in one-letter code: Leucine--tRNA ligase (876 aa).

Residues 43–53 (PYPSGRIHIGH) carry the 'HIGH' region motif. A 'KMSKS' region motif is present at residues 632–636 (KMSKS). An ATP-binding site is contributed by lysine 635.

It belongs to the class-I aminoacyl-tRNA synthetase family.

It is found in the cytoplasm. The catalysed reaction is tRNA(Leu) + L-leucine + ATP = L-leucyl-tRNA(Leu) + AMP + diphosphate. In Allorhizobium ampelinum (strain ATCC BAA-846 / DSM 112012 / S4) (Agrobacterium vitis (strain S4)), this protein is Leucine--tRNA ligase.